A 440-amino-acid chain; its full sequence is uncharacterized protein (440 aa).

Residues 1-29 (MLRLQMMEGLIVKRTLLLILLLVISVSYA) form the signal peptide.

It belongs to the Mj S-layer protein family.

This is an uncharacterized protein from Methanocaldococcus jannaschii (strain ATCC 43067 / DSM 2661 / JAL-1 / JCM 10045 / NBRC 100440) (Methanococcus jannaschii).